A 332-amino-acid chain; its full sequence is Holliday junction branch migration complex subunit RuvB (332 aa).

A large ATPase domain (RuvB-L) region spans residues 1-181 (MERIISELEM…FGVSHKMEYY (181 aa)). ATP-binding residues include L20, R21, G62, K65, T66, T67, R171, Y181, and R218. A Mg(2+)-binding site is contributed by T66. The tract at residues 182-252 (NENEIKSIII…SAKNALDMLG (71 aa)) is small ATPAse domain (RuvB-S). Residues 255 to 332 (SNGLDDLDRN…QHFKKVEVKI (78 aa)) are head domain (RuvB-H). R291, R310, and R315 together coordinate DNA.

This sequence belongs to the RuvB family. Homohexamer. Forms an RuvA(8)-RuvB(12)-Holliday junction (HJ) complex. HJ DNA is sandwiched between 2 RuvA tetramers; dsDNA enters through RuvA and exits via RuvB. An RuvB hexamer assembles on each DNA strand where it exits the tetramer. Each RuvB hexamer is contacted by two RuvA subunits (via domain III) on 2 adjacent RuvB subunits; this complex drives branch migration. In the full resolvosome a probable DNA-RuvA(4)-RuvB(12)-RuvC(2) complex forms which resolves the HJ.

It is found in the cytoplasm. It carries out the reaction ATP + H2O = ADP + phosphate + H(+). The RuvA-RuvB-RuvC complex processes Holliday junction (HJ) DNA during genetic recombination and DNA repair, while the RuvA-RuvB complex plays an important role in the rescue of blocked DNA replication forks via replication fork reversal (RFR). RuvA specifically binds to HJ cruciform DNA, conferring on it an open structure. The RuvB hexamer acts as an ATP-dependent pump, pulling dsDNA into and through the RuvAB complex. RuvB forms 2 homohexamers on either side of HJ DNA bound by 1 or 2 RuvA tetramers; 4 subunits per hexamer contact DNA at a time. Coordinated motions by a converter formed by DNA-disengaged RuvB subunits stimulates ATP hydrolysis and nucleotide exchange. Immobilization of the converter enables RuvB to convert the ATP-contained energy into a lever motion, pulling 2 nucleotides of DNA out of the RuvA tetramer per ATP hydrolyzed, thus driving DNA branch migration. The RuvB motors rotate together with the DNA substrate, which together with the progressing nucleotide cycle form the mechanistic basis for DNA recombination by continuous HJ branch migration. Branch migration allows RuvC to scan DNA until it finds its consensus sequence, where it cleaves and resolves cruciform DNA. The chain is Holliday junction branch migration complex subunit RuvB from Fusobacterium nucleatum subsp. nucleatum (strain ATCC 25586 / DSM 15643 / BCRC 10681 / CIP 101130 / JCM 8532 / KCTC 2640 / LMG 13131 / VPI 4355).